The following is a 22-amino-acid chain: Heat shock 70-related protein 1, mitochondrial (22 aa).

Belongs to the heat shock protein 70 family.

It is found in the mitochondrion. The polypeptide is Heat shock 70-related protein 1, mitochondrial (Leishmania tarentolae (Sauroleishmania tarentolae)).